A 152-amino-acid polypeptide reads, in one-letter code: Transcriptional regulator MraZ (152 aa).

SpoVT-AbrB domains are found at residues 5–52 (TSAI…PLPE) and 81–124 (ASDC…HDTA).

Belongs to the MraZ family. In terms of assembly, forms oligomers.

The protein localises to the cytoplasm. The protein resides in the nucleoid. The sequence is that of Transcriptional regulator MraZ from Colwellia psychrerythraea (strain 34H / ATCC BAA-681) (Vibrio psychroerythus).